Reading from the N-terminus, the 558-residue chain is Putative ABC transporter ATP-binding protein gbs1680 (558 aa).

ABC transporter domains follow at residues 5 to 246 (IEWK…GIRE) and 295 to 527 (LSVQ…THLK). Residues 39 to 46 (GPSGSGKS) and 328 to 335 (GKNGAGKS) each bind ATP.

Belongs to the ABC transporter superfamily.

Its subcellular location is the cell membrane. In terms of biological role, probably part of an ABC transporter complex. Responsible for energy coupling to the transport system. This chain is Putative ABC transporter ATP-binding protein gbs1680, found in Streptococcus agalactiae serotype III (strain NEM316).